The chain runs to 1219 residues: Pleckstrin homology domain-containing family G member 3 (1219 aa).

The span at 1-10 (MPVSTSLHQD) shows a compositional bias: polar residues. The segment at 1-66 (MPVSTSLHQD…HLPNSNNNSS (66 aa)) is disordered. Residues 18–46 (SLTSTTSSSGSSCDSRSAMEEPSSSEAPA) are compositionally biased toward low complexity. The residue at position 76 (S76) is a Phosphoserine. The region spanning 93-272 (YLGRVVREIV…TCVAWYINDM (180 aa)) is the DH domain. A PH domain is found at 296–394 (DLTTYGELVL…WTHHIKRLIL (99 aa)). Positions 431–442 (WSSQDEVSTNVR) are enriched in polar residues. Disordered stretches follow at residues 431–599 (WSSQ…PSVL) and 613–708 (FSRR…KESA). Residue S433 is modified to Phosphoserine. The segment covering 446–463 (RQSEPTKHLLRQLNEKAR) has biased composition (basic and acidic residues). Phosphoserine is present on residues S576, S577, S618, S631, S640, S643, and S647. Residues 630–645 (GSPRLVSRSSSVLSLE) show a composition bias toward low complexity. Basic and acidic residues predominate over residues 696-708 (EPDRSSCKKKESA). S741, S779, and S827 each carry phosphoserine. 5 disordered regions span residues 756–780 (RFNS…VGSR), 821–840 (MESS…ANGF), 859–878 (EESA…RSPA), 955–1133 (APER…LYVT), and 1146–1207 (VMEK…RVRN). The span at 826–836 (GSPGKGPGQGQ) shows a compositional bias: gly residues. Residues 859-873 (EESATASPESSSPTE) are compositionally biased toward low complexity. Residues S962, S1011, S1023, S1037, and S1040 each carry the phosphoserine modification. The segment covering 1020-1029 (SAVSQRTTSP) has biased composition (polar residues). Over residues 1049–1065 (DVRELCSKYASRDEARR) the composition is skewed to basic and acidic residues. Phosphoserine is present on S1081. Position 1107 is an omega-N-methylarginine (R1107). Basic and acidic residues predominate over residues 1187–1197 (QPKEEGSRDPA).

It localises to the cytoplasm. It is found in the cytoskeleton. In terms of biological role, plays a role in controlling cell polarity and cell motility by selectively binding newly polymerized actin and activating RAC1 and CDC42 to enhance local actin polymerization. The protein is Pleckstrin homology domain-containing family G member 3 of Homo sapiens (Human).